A 699-amino-acid chain; its full sequence is Elongation factor G (699 aa).

The region spanning 8–288 (EDYRNFGIMA…AVVDYLPSPM (281 aa)) is the tr-type G domain. GTP contacts are provided by residues 17–24 (AHIDAGKT), 86–90 (DTPGH), and 140–143 (NKMD).

The protein belongs to the TRAFAC class translation factor GTPase superfamily. Classic translation factor GTPase family. EF-G/EF-2 subfamily.

Its subcellular location is the cytoplasm. Its function is as follows. Catalyzes the GTP-dependent ribosomal translocation step during translation elongation. During this step, the ribosome changes from the pre-translocational (PRE) to the post-translocational (POST) state as the newly formed A-site-bound peptidyl-tRNA and P-site-bound deacylated tRNA move to the P and E sites, respectively. Catalyzes the coordinated movement of the two tRNA molecules, the mRNA and conformational changes in the ribosome. The sequence is that of Elongation factor G from Rhizobium johnstonii (strain DSM 114642 / LMG 32736 / 3841) (Rhizobium leguminosarum bv. viciae).